The following is a 180-amino-acid chain: ATP synthase subunit delta (180 aa).

Belongs to the ATPase delta chain family. In terms of assembly, F-type ATPases have 2 components, F(1) - the catalytic core - and F(0) - the membrane proton channel. F(1) has five subunits: alpha(3), beta(3), gamma(1), delta(1), epsilon(1). F(0) has three main subunits: a(1), b(2) and c(10-14). The alpha and beta chains form an alternating ring which encloses part of the gamma chain. F(1) is attached to F(0) by a central stalk formed by the gamma and epsilon chains, while a peripheral stalk is formed by the delta and b chains.

The protein localises to the cell membrane. In terms of biological role, f(1)F(0) ATP synthase produces ATP from ADP in the presence of a proton or sodium gradient. F-type ATPases consist of two structural domains, F(1) containing the extramembraneous catalytic core and F(0) containing the membrane proton channel, linked together by a central stalk and a peripheral stalk. During catalysis, ATP synthesis in the catalytic domain of F(1) is coupled via a rotary mechanism of the central stalk subunits to proton translocation. This protein is part of the stalk that links CF(0) to CF(1). It either transmits conformational changes from CF(0) to CF(1) or is implicated in proton conduction. This is ATP synthase subunit delta from Lactobacillus delbrueckii subsp. bulgaricus (strain ATCC BAA-365 / Lb-18).